The chain runs to 589 residues: Putative sphingomyelin phosphodiesterase asm-3 (589 aa).

Positions 1-17 are cleaved as a signal peptide; sequence MLLGLLVLSLAFQGTLA. Residues 18–101 form the Saposin B-type domain; it reads VTECEECKSI…LMKNDCGDFV (84 aa). 3 cysteine pairs are disulfide-bonded: cysteine 21–cysteine 97, cysteine 24–cysteine 89, and cysteine 52–cysteine 63. Asparagine 109 carries an N-linked (GlcNAc...) asparagine glycan. Zn(2+) contacts are provided by aspartate 139 and histidine 141. 2 cysteine pairs are disulfide-bonded: cysteine 154/cysteine 159 and cysteine 160/cysteine 188. Aspartate 217 lines the Zn(2+) pocket. Residue asparagine 237 is glycosylated (N-linked (GlcNAc...) asparagine). Asparagine 257 contacts Zn(2+). An N-linked (GlcNAc...) asparagine glycan is attached at asparagine 334. 3 residues coordinate Zn(2+): histidine 364, histidine 398, and histidine 400. An N-linked (GlcNAc...) asparagine glycan is attached at asparagine 463. 2 cysteine pairs are disulfide-bonded: cysteine 530-cysteine 535 and cysteine 541-cysteine 553. Positions 562-589 are disordered; it reads KPEPKKNKYSARFATSNERRRGKEECKI. The segment covering 578–589 has biased composition (basic and acidic residues); it reads NERRRGKEECKI.

It belongs to the acid sphingomyelinase family. Zn(2+) is required as a cofactor.

It is found in the secreted. It catalyses the reaction an N-(acyl)-sphingosylphosphocholine + H2O = an N-acyl-sphingoid base + phosphocholine + H(+). The catalysed reaction is a sphingomyelin + H2O = phosphocholine + an N-acylsphing-4-enine + H(+). The enzyme catalyses an N-acyl-15-methylhexadecasphing-4-enine-1-phosphocholine + H2O = an N-acyl-15-methylhexadecasphing-4-enine + phosphocholine + H(+). It participates in lipid metabolism; sphingolipid metabolism. Its function is as follows. Converts sphingomyelin to ceramide (N-acyl-sphingoid base) and phosphocholine. C.elegans contain specific sphingoid bases, which are unique or different in structure compared to the sphingoid bases found in other animals. Two examples of these distinctive compounds are: 15-methylhexadecasphinganine and 15-methylhexadecasphing-4-enine. This chain is Putative sphingomyelin phosphodiesterase asm-3 (asm-3), found in Caenorhabditis elegans.